Consider the following 136-residue polypeptide: uncharacterized protein (136 aa).

This is an uncharacterized protein from Caenorhabditis elegans.